A 236-amino-acid chain; its full sequence is Large ribosomal subunit protein uL3 (236 aa).

Positions 215-236 (PAPEPAAPVAAAAAGTGEEASA) are disordered. The span at 221-236 (APVAAAAAGTGEEASA) shows a compositional bias: low complexity.

Belongs to the universal ribosomal protein uL3 family. Part of the 50S ribosomal subunit. Forms a cluster with proteins L14 and L19.

Its function is as follows. One of the primary rRNA binding proteins, it binds directly near the 3'-end of the 23S rRNA, where it nucleates assembly of the 50S subunit. The protein is Large ribosomal subunit protein uL3 of Parafrankia sp. (strain EAN1pec).